Here is a 619-residue protein sequence, read N- to C-terminus: Dihydroxy-acid dehydratase 1 (619 aa).

Asp81 is a Mg(2+) binding site. Cys122 provides a ligand contact to [2Fe-2S] cluster. Mg(2+) is bound by residues Asp123 and Lys124. An N6-carboxylysine modification is found at Lys124. Residue Cys198 participates in [2Fe-2S] cluster binding. Residue Glu494 participates in Mg(2+) binding. The active-site Proton acceptor is Ser520.

It belongs to the IlvD/Edd family. In terms of assembly, homodimer. [2Fe-2S] cluster serves as cofactor. Mg(2+) is required as a cofactor.

The enzyme catalyses (2R)-2,3-dihydroxy-3-methylbutanoate = 3-methyl-2-oxobutanoate + H2O. It catalyses the reaction (2R,3R)-2,3-dihydroxy-3-methylpentanoate = (S)-3-methyl-2-oxopentanoate + H2O. It participates in amino-acid biosynthesis; L-isoleucine biosynthesis; L-isoleucine from 2-oxobutanoate: step 3/4. The protein operates within amino-acid biosynthesis; L-valine biosynthesis; L-valine from pyruvate: step 3/4. Its function is as follows. Functions in the biosynthesis of branched-chain amino acids. Catalyzes the dehydration of (2R,3R)-2,3-dihydroxy-3-methylpentanoate (2,3-dihydroxy-3-methylvalerate) into 2-oxo-3-methylpentanoate (2-oxo-3-methylvalerate) and of (2R)-2,3-dihydroxy-3-methylbutanoate (2,3-dihydroxyisovalerate) into 2-oxo-3-methylbutanoate (2-oxoisovalerate), the penultimate precursor to L-isoleucine and L-valine, respectively. The polypeptide is Dihydroxy-acid dehydratase 1 (Bordetella pertussis (strain Tohama I / ATCC BAA-589 / NCTC 13251)).